The following is a 160-amino-acid chain: Baculoviral IAP repeat-containing protein 5.1 (160 aa).

Residues 27-97 form a BIR repeat; that stretch reads RLATFADWPF…KRSASCGFLS (71 aa). At Thr-43 the chain carries Phosphothreonine; by CDK1. The Zn(2+) site is built by Cys-66, Cys-69, His-86, and Cys-93.

The protein belongs to the IAP family. Component of the CPC at least composed of survivin/birc5, incenp, cdca8/borealin and/or cdca9/dasra-A, and aurkb/aurora-B. Interacts directly with incenp (via N-terminus), and may weakly interact with aurkb (via N-terminus) to stabilize the complex. Interacts with GTP-bound ran in both the S and M phases of the cell cycle. Also found in a complex with ubiquitin-mediated signaling proteins including at least usp9x/xFAM, nploc4/npl4 and ufd1. Ubiquitination is required for centrosome-targeting.

The protein resides in the cytoplasm. Its subcellular location is the nucleus. It is found in the chromosome. The protein localises to the centromere. It localises to the cytoskeleton. The protein resides in the spindle. Functionally, component of the chromosomal passenger complex (CPC), a complex that acts as a key regulator of mitosis. The CPC complex has essential functions at the centromere in ensuring correct chromosome alignment and segregation and is required for chromatin-induced microtubule stabilization and spindle assembly. Stimulates the mitotic kinase activity of aurkb/aurora-B in the CPC. Does not appear to exhibit anti-apoptotic activity. The sequence is that of Baculoviral IAP repeat-containing protein 5.1 (birc5.1) from Xenopus tropicalis (Western clawed frog).